Here is a 179-residue protein sequence, read N- to C-terminus: Beta-defensin 22 (179 aa).

The first 20 residues, 1–20, serve as a signal peptide directing secretion; it reads MKSLLSTLVIIMFLAHLVTG. 3 cysteine pairs are disulfide-bonded: C27–C58, C34–C52, and C38–C59. A compositionally biased stretch (low complexity) spans 105-150; the sequence is GTPTKTSAPAKTSAPAKTSTTTKASNAAKASTTTKASNAAKASAAT. Residues 105 to 152 are disordered; that stretch reads GTPTKTSAPAKTSAPAKTSTTTKASNAAKASTTTKASNAAKASAATMA.

Belongs to the beta-defensin family. In terms of processing, O-glycosylated; glycans contain alpha(2,3)-linked sialic acids. In terms of tissue distribution, specifically expressed in corpus epididymis and cauda epididymis with expression in corpus being highest (at protein level). Not detected in other tissues tested, including testis, prostate, seminal vesicle and vas deferens (at protein level).

The protein localises to the cytoplasmic vesicle. It localises to the secretory vesicle. Its subcellular location is the acrosome. It is found in the secreted. The protein resides in the extracellular space. Probable component of sperm glycocalyx. Likely protects and facilitates transport of sperm in the female reproductive tract. Probably released from the sperm surface during capacitation. The chain is Beta-defensin 22 from Mus musculus (Mouse).